A 643-amino-acid chain; its full sequence is uncharacterized protein (643 aa).

Residues 9-29 (IVLALLLLLLPVVCGDVSVYK) traverse the membrane as a helical segment.

The protein localises to the membrane. This is an uncharacterized protein from Methanocaldococcus jannaschii (strain ATCC 43067 / DSM 2661 / JAL-1 / JCM 10045 / NBRC 100440) (Methanococcus jannaschii).